The primary structure comprises 842 residues: MVKKFTSKIKAAVFAAVVAATAIFGPAISSQAVTSVPYKWDNVVIGGGGGFMPGIVFNETEKDLIYARADIGGAYRWDPSTETWIPLLDHFQMDEYSYYGVESIATDPVDPNRVYIVAGMYTNDWLPNMGAILRSTDRGETWEKTILPFKMGGNMPGRSMGERLAIDPNDNRILYLGTRCGNGLWRSTDYGVTWSKVESFPNPGTYIYDPNFDYTKDIIGVVWVVFDKSSSTPGNPTKTIYVGVADKNESIYRSTDGGVTWKAVPGQPKGLLPHHGVLASNGMLYITYGDTCGPYDGNGKGQVWKFNTRTGEWIDITPIPYSSSDNRFCFAGLAVDRQNPDIIMVTSMNAWWPDEYIFRSTDGGATWKNIWEWGMYPERILHYEIDISAAPWLDWGTEKQLPEINPKLGWMIGDIEIDPFNSDRMMYVTGATIYGCDNLTDWDRGGKVKIEVKATGIEECAVLDLVSPPEGAPLVSAVGDLVGFVHDDLKVGPKKMHVPSYSSGTGIDYAELVPNFMALVAKADLYDVKKISFSYDGGRNWFQPPNEAPNSVGGGSVAVAADAKSVIWTPENASPAVTTDNGNSWKVCTNLGMGAVVASDRVNGKKFYAFYNGKFYISTDGGLTFTDTKAPQLPKSVNKIKAVPGKEGHVWLAAREGGLWRSTDGGYTFEKLSNVDTAHVVGFGKAAPGQDYMAIYITGKIDNVLGFFRSDDAGKTWVRINDDEHGYGAVDTAITGDPRVYGRVYIATNGRGIVYGEPASDEPVPTPPQVDKGLVGDLNGDNRINSTDLTLMKRYILKSIEDLPVEDDLWAADINGDGKINSTDYTYLKKYLLQAIPELPKK.

An N-terminal signal peptide occupies residues 1–32 (MVKKFTSKIKAAVFAAVVAATAIFGPAISSQA). Asp70 functions as the Nucleophile in the catalytic mechanism. BNR repeat units follow at residues 134–144 (RSTDRGETWEK), 185–196 (WRSTDYGVTWSK), 252–262 (YRSTDGGVTWK), and 358–368 (FRSTDGGATWK). Asp480 acts as the Proton donor in catalysis. 5 BNR repeats span residues 533 to 541 (FSYDGGRNW), 577 to 586 (VTTDNGNSWK), 616 to 626 (YISTDGGLTFT), 660 to 671 (WRSTDGGYTFEK), and 708 to 718 (FRSDDAGKTWV). Positions 771–841 (DKGLVGDLNG…LLQAIPELPK (71 aa)) constitute a Dockerin domain.

It belongs to the glycosyl hydrolase 74 family.

Its function is as follows. Hydrolyzes the glucosidic bonds of unbranched Glc residues in tamarind seed xyloglucan, producing XXXG, XLXG, XXLG and XLLG. Has low activity on carboxymethylcellulose, lichenan,hydroxyethylcellulose and glucuronoxylan, and no activity on xylan, polygalaturonic acid, wheat arabinoxylan, rhamnogalacturan, curdlan, laminarin, galactomannan, galactan, arabinan and pachyman or amorphous cellulose. The sequence is that of Xyloglucanase Xgh74A from Acetivibrio thermocellus (Hungateiclostridium thermocellum).